The primary structure comprises 291 residues: Phytanoyl-CoA dioxygenase domain-containing protein 1 (291 aa).

A Phosphothreonine modification is found at Thr55. 2-oxoglutarate contacts are provided by residues Lys102, Met141, 156 to 158, and Trp174; that span reads HQD. The Fe cation site is built by His156 and Asp158. His246 provides a ligand contact to Fe cation. 2-oxoglutarate-binding residues include Ser248 and Arg257.

The protein belongs to the PhyH family. PHYHD1 subfamily. The cofactor is Fe cation.

2-oxoglutarate(2OG)-dependent dioxygenase that catalyzes the conversion of 2-oxoglutarate to succinate and CO(2) in an iron-dependent manner. However, does not couple 2OG turnover to the hydroxylation of acyl-coenzyme A derivatives, implying that it is not directly involved in phytanoyl coenzyme-A metabolism. Does not show detectable activity towards fatty acid CoA thioesters. In Bos taurus (Bovine), this protein is Phytanoyl-CoA dioxygenase domain-containing protein 1 (PHYHD1).